The chain runs to 337 residues: Protein-methionine-sulfoxide reductase catalytic subunit MsrP (337 aa).

A signal peptide (tat-type signal) is located at residues 1-50 (MLIKLPSASGSKESDVTPESIYLSRRTLLASSLAGLAVTALPRWASAADA). Mo-molybdopterin-binding positions include Asn-94, 97–98 (YE), Cys-152, Thr-187, Asn-237, Arg-242, and 253–255 (SVK).

It belongs to the MsrP family. Heterodimer of a catalytic subunit (MsrP) and a heme-binding subunit (MsrQ). The cofactor is Mo-molybdopterin. In terms of processing, predicted to be exported by the Tat system. The position of the signal peptide cleavage has not been experimentally proven.

The protein resides in the periplasm. The catalysed reaction is L-methionyl-[protein] + a quinone + H2O = L-methionyl-(S)-S-oxide-[protein] + a quinol. The enzyme catalyses L-methionyl-[protein] + a quinone + H2O = L-methionyl-(R)-S-oxide-[protein] + a quinol. Its function is as follows. Part of the MsrPQ system that repairs oxidized periplasmic proteins containing methionine sulfoxide residues (Met-O), using respiratory chain electrons. Thus protects these proteins from oxidative-stress damage caused by reactive species of oxygen and chlorine generated by the host defense mechanisms. MsrPQ is essential for the maintenance of envelope integrity under bleach stress, rescuing a wide series of structurally unrelated periplasmic proteins from methionine oxidation. The catalytic subunit MsrP is non-stereospecific, being able to reduce both (R-) and (S-) diastereoisomers of methionine sulfoxide. This Pseudomonas syringae pv. tomato (strain ATCC BAA-871 / DC3000) protein is Protein-methionine-sulfoxide reductase catalytic subunit MsrP.